The following is a 341-amino-acid chain: Phosphate acyltransferase (341 aa).

It belongs to the PlsX family. As to quaternary structure, homodimer. Probably interacts with PlsY.

Its subcellular location is the cytoplasm. The enzyme catalyses a fatty acyl-[ACP] + phosphate = an acyl phosphate + holo-[ACP]. Its pathway is lipid metabolism; phospholipid metabolism. Its function is as follows. Catalyzes the reversible formation of acyl-phosphate (acyl-PO(4)) from acyl-[acyl-carrier-protein] (acyl-ACP). This enzyme utilizes acyl-ACP as fatty acyl donor, but not acyl-CoA. The polypeptide is Phosphate acyltransferase (Chlorobaculum parvum (strain DSM 263 / NCIMB 8327) (Chlorobium vibrioforme subsp. thiosulfatophilum)).